The primary structure comprises 170 residues: ATP synthase subunit b (170 aa).

A helical membrane pass occupies residues 25–45 (LIPNGTFFAVLIIFLIVLGVI). The disordered stretch occupies residues 121-147 (EVAQTLTQADQQLSAQGDQVRSGLESS). Residues 122–139 (VAQTLTQADQQLSAQGDQ) show a composition bias toward polar residues.

The protein belongs to the ATPase B chain family. F-type ATPases have 2 components, F(1) - the catalytic core - and F(0) - the membrane proton channel. F(1) has five subunits: alpha(3), beta(3), gamma(1), delta(1), epsilon(1). F(0) has three main subunits: a(1), b(2) and c(10-14). The alpha and beta chains form an alternating ring which encloses part of the gamma chain. F(1) is attached to F(0) by a central stalk formed by the gamma and epsilon chains, while a peripheral stalk is formed by the delta and b chains.

It localises to the cell membrane. Its function is as follows. F(1)F(0) ATP synthase produces ATP from ADP in the presence of a proton or sodium gradient. F-type ATPases consist of two structural domains, F(1) containing the extramembraneous catalytic core and F(0) containing the membrane proton channel, linked together by a central stalk and a peripheral stalk. During catalysis, ATP synthesis in the catalytic domain of F(1) is coupled via a rotary mechanism of the central stalk subunits to proton translocation. In terms of biological role, component of the F(0) channel, it forms part of the peripheral stalk, linking F(1) to F(0). The sequence is that of ATP synthase subunit b from Mycolicibacterium smegmatis (strain ATCC 700084 / mc(2)155) (Mycobacterium smegmatis).